We begin with the raw amino-acid sequence, 248 residues long: ATP synthase delta chain, chloroplastic (248 aa).

A chloroplast-targeting transit peptide spans 1–60; it reads MAALQQTPITFQSRSPPPTQIISGPTAKLSFSGGLKLPKLTIKLRSNRTSRRGGGAAGSK.

The protein belongs to the ATPase delta chain family. In terms of assembly, F-type ATPases have 2 components, CF(1) - the catalytic core - and CF(0) - the membrane proton channel. CF(1) has five subunits: alpha(3), beta(3), gamma(1), delta(1), epsilon(1). CF(0) has three main subunits: a, b and c.

It is found in the plastid. The protein resides in the chloroplast thylakoid membrane. Its function is as follows. This protein seems to be part of the stalk that links CF(0) to CF(1). It either transmits conformational changes from CF(0) into CF(1) or is implicated in proton conduction. The protein is ATP synthase delta chain, chloroplastic (ATPD) of Nicotiana tabacum (Common tobacco).